The chain runs to 365 residues: Peptide chain release factor 2 (365 aa).

An N5-methylglutamine modification is found at Q252.

This sequence belongs to the prokaryotic/mitochondrial release factor family. Post-translationally, methylated by PrmC. Methylation increases the termination efficiency of RF2.

It localises to the cytoplasm. Its function is as follows. Peptide chain release factor 2 directs the termination of translation in response to the peptide chain termination codons UGA and UAA. The chain is Peptide chain release factor 2 from Tolumonas auensis (strain DSM 9187 / NBRC 110442 / TA 4).